Reading from the N-terminus, the 138-residue chain is Putative pre-16S rRNA nuclease (138 aa).

The protein belongs to the YqgF nuclease family.

The protein localises to the cytoplasm. Its function is as follows. Could be a nuclease involved in processing of the 5'-end of pre-16S rRNA. This chain is Putative pre-16S rRNA nuclease, found in Flavobacterium johnsoniae (strain ATCC 17061 / DSM 2064 / JCM 8514 / BCRC 14874 / CCUG 350202 / NBRC 14942 / NCIMB 11054 / UW101) (Cytophaga johnsonae).